We begin with the raw amino-acid sequence, 797 residues long: Trafficking protein particle complex subunit 12 (797 aa).

Disordered stretches follow at residues methionine 1–serine 257 and serine 286–serine 338. The span at glutamine 9–glutamate 23 shows a compositional bias: low complexity. Positions methionine 29 to threonine 43 are enriched in basic and acidic residues. Residues glycine 47–proline 58 are compositionally biased toward acidic residues. Basic and acidic residues-rich tracts occupy residues phenylalanine 66 to methionine 75 and alanine 107 to valine 121. Phosphoserine occurs at positions 125 and 128. The residue at position 130 (threonine 130) is a Phosphothreonine. The segment covering valine 173–glutamine 185 has biased composition (basic and acidic residues). Residues isoleucine 206 to glutamine 216 are compositionally biased toward polar residues. Over residues serine 232 to lysine 244 the composition is skewed to low complexity. Residues serine 234, serine 309, and serine 314 each carry the phosphoserine modification. 4 TPR repeats span residues glycine 607–glutamine 640, proline 642–leucine 675, isoleucine 682–asparagine 715, and alanine 716–histidine 749.

In terms of assembly, component of the multisubunit TRAPP (transport protein particle) complex, which includes at least TRAPPC2, TRAPPC2L, TRAPPC3, TRAPPC3L, TRAPPC4, TRAPPC5, TRAPPC8, TRAPPC9, TRAPPC10, TRAPPC11 and TRAPPC12. Interacts with CENPE. In terms of processing, phosphorylated as the cells enter mitosis but is dephosphorylated at or before the onset of anaphase. The phosphorylated form recruits CENPE to kinetochores more efficiently than the non-phosphorylated form.

Its subcellular location is the endoplasmic reticulum-Golgi intermediate compartment. It is found in the nucleus. Component of the TRAPP complex, which is involved in endoplasmic reticulum to Golgi apparatus trafficking at a very early stage. Also plays a role in chromosome congression, kinetochore assembly and stability and controls the recruitment of CENPE to the kinetochores. The protein is Trafficking protein particle complex subunit 12 of Mus musculus (Mouse).